Here is a 255-residue protein sequence, read N- to C-terminus: Taurine import ATP-binding protein TauB (255 aa).

Residues 2 to 229 (LQISHLYADY…RFVAGESSRS (228 aa)) form the ABC transporter domain. Residue 34–41 (GPSGCGKT) participates in ATP binding.

The protein belongs to the ABC transporter superfamily. Taurine importer (TC 3.A.1.17.1) family. The complex is composed of two ATP-binding proteins (TauB), two transmembrane proteins (TauC) and a solute-binding protein (TauA).

The protein localises to the cell inner membrane. The catalysed reaction is taurine(out) + ATP + H2O = taurine(in) + ADP + phosphate + H(+). In terms of biological role, part of the ABC transporter complex TauABC involved in taurine import. Responsible for energy coupling to the transport system. The chain is Taurine import ATP-binding protein TauB from Escherichia coli O157:H7.